The chain runs to 121 residues: MKKVLALMVAATLGLSSVAFAADTTATATPAATSTTATVAAQTKATQHQKHKVTKKTTEQKAQAAKKHEKKASVQKTPVQKAQAAKKHVKKASVQKAPVQKAQAAKKHHKTAKKPVAAPAA.

Residues 1-21 (MKKVLALMVAATLGLSSVAFA) form the signal peptide. The propeptide occupies 22–63 (ADTTATATPAATSTTATVAAQTKATQHQKHKVTKKTTEQKAQ). Positions 40–121 (AAQTKATQHQ…AKKPVAAPAA (82 aa)) are disordered. Residues 84–93 (AAKKHVKKAS) show a composition bias toward basic residues. Residues 94–103 (VQKAPVQKAQ) are compositionally biased toward low complexity. Residues 104–113 (AAKKHHKTAK) are compositionally biased toward basic residues.

Belongs to the Asr family. Proteolytic processing gives rise to the active protein.

The protein resides in the periplasm. Required for growth and/or survival at acidic conditions. The chain is Acid shock protein from Yersinia pestis bv. Antiqua (strain Antiqua).